Here is a 258-residue protein sequence, read N- to C-terminus: Regulatory protein RecX (258 aa).

This sequence belongs to the RecX family.

The protein resides in the cytoplasm. Modulates RecA activity. This is Regulatory protein RecX from Streptococcus equi subsp. zooepidemicus (strain MGCS10565).